The following is a 93-amino-acid chain: uncharacterized protein (93 aa).

To M.tuberculosis Rv1738.

This is an uncharacterized protein from Mycobacterium tuberculosis (strain CDC 1551 / Oshkosh).